A 326-amino-acid polypeptide reads, in one-letter code: Apolipoprotein F (326 aa).

The N-terminal stretch at 1-35 (MTGLCGYSAPDMRGLRLIMIPVELLLCYLLLHPVD) is a signal peptide. The propeptide occupies 36–164 (ATSYGKQTNV…EQQSTGRVGR (129 aa)). N118 is a glycosylation site (N-linked (GlcNAc...) asparagine). An O-linked (GalNAc...) threonine glycan is attached at T274. S323 is modified (phosphoserine).

This sequence belongs to the apolipoprotein F family. Post-translationally, O-glycosylated with core 1 or possibly core 8 glycans. As to expression, expressed by the liver and secreted in plasma.

The protein localises to the secreted. In terms of biological role, minor apolipoprotein that associates with LDL. Inhibits cholesteryl ester transfer protein (CETP) activity and appears to be an important regulator of cholesterol transport. Also associates to a lesser degree with VLDL, Apo-AI and Apo-AII. This chain is Apolipoprotein F (APOF), found in Homo sapiens (Human).